We begin with the raw amino-acid sequence, 206 residues long: Large ribosomal subunit protein uL4 (206 aa).

It belongs to the universal ribosomal protein uL4 family. In terms of assembly, part of the 50S ribosomal subunit.

Functionally, one of the primary rRNA binding proteins, this protein initially binds near the 5'-end of the 23S rRNA. It is important during the early stages of 50S assembly. It makes multiple contacts with different domains of the 23S rRNA in the assembled 50S subunit and ribosome. Forms part of the polypeptide exit tunnel. The protein is Large ribosomal subunit protein uL4 of Rhodopseudomonas palustris (strain BisB5).